The sequence spans 391 residues: Processive diacylglycerol beta-glucosyltransferase (391 aa).

It belongs to the glycosyltransferase 28 family. UgtP subfamily.

It localises to the cell membrane. It carries out the reaction a 1,2-diacyl-3-O-(beta-D-glucopyranosyl)-sn-glycerol + UDP-alpha-D-glucose = a 1,2-diacyl-3-O-(beta-D-Glc-(1-&gt;6)-beta-D-Glc)-sn-glycerol + UDP + H(+). The catalysed reaction is a 1,2-diacyl-sn-glycerol + UDP-alpha-D-glucose = a 1,2-diacyl-3-O-(beta-D-glucopyranosyl)-sn-glycerol + UDP + H(+). Its pathway is glycolipid metabolism; diglucosyl-diacylglycerol biosynthesis. In terms of biological role, processive glucosyltransferase involved in the biosynthesis of both the bilayer- and non-bilayer-forming membrane glucolipids. Is able to successively transfer two glucosyl residues to diacylglycerol (DAG), thereby catalyzing the formation of beta-monoglucosyl-DAG (3-O-(beta-D-glucopyranosyl)-1,2-diacyl-sn-glycerol) and beta-diglucosyl-DAG (3-O-(beta-D-glucopyranosyl-beta-(1-&gt;6)-D-glucopyranosyl)-1,2-diacyl-sn-glycerol). Beta-diglucosyl-DAG is the predominant glycolipid found in Bacillales and is also used as a membrane anchor for lipoteichoic acid (LTA). The protein is Processive diacylglycerol beta-glucosyltransferase of Staphylococcus aureus (strain MRSA252).